Reading from the N-terminus, the 504-residue chain is Anaerobic nitric oxide reductase transcription regulator NorR (504 aa).

The residue at position 57 (D57) is a 4-aspartylphosphate. Residues 187 to 416 form the Sigma-54 factor interaction domain; the sequence is MIGLSPGMTQ…LEHAIHRAVV (230 aa). Residues 215-222 and 278-287 contribute to the ATP site; these read GETGTGKE and ADNGTLFLDE. Residues 479-498 constitute a DNA-binding region (H-T-H motif); the sequence is WAASARMLETDVANLHRLAK.

Its pathway is nitrogen metabolism; nitric oxide reduction. Its function is as follows. Required for the expression of anaerobic nitric oxide (NO) reductase, acts as a transcriptional activator for at least the norVW operon. Activation also requires sigma-54. The sequence is that of Anaerobic nitric oxide reductase transcription regulator NorR from Escherichia fergusonii (strain ATCC 35469 / DSM 13698 / CCUG 18766 / IAM 14443 / JCM 21226 / LMG 7866 / NBRC 102419 / NCTC 12128 / CDC 0568-73).